The primary structure comprises 738 residues: Phosphoribosylformylglycinamidine synthase subunit PurL (738 aa).

Histidine 53 is a catalytic residue. Residues tyrosine 56 and lysine 95 each coordinate ATP. Glutamate 97 is a Mg(2+) binding site. Substrate-binding positions include 98-101 (SHNH) and arginine 120. Catalysis depends on histidine 99, which acts as the Proton acceptor. Aspartate 121 provides a ligand contact to Mg(2+). Glutamine 244 contacts substrate. Residue aspartate 274 coordinates Mg(2+). 318-320 (ESQ) serves as a coordination point for substrate. ATP-binding residues include aspartate 499 and glycine 536. Residue asparagine 537 coordinates Mg(2+). Serine 539 contributes to the substrate binding site.

This sequence belongs to the FGAMS family. As to quaternary structure, monomer. Part of the FGAM synthase complex composed of 1 PurL, 1 PurQ and 2 PurS subunits.

Its subcellular location is the cytoplasm. The enzyme catalyses N(2)-formyl-N(1)-(5-phospho-beta-D-ribosyl)glycinamide + L-glutamine + ATP + H2O = 2-formamido-N(1)-(5-O-phospho-beta-D-ribosyl)acetamidine + L-glutamate + ADP + phosphate + H(+). Its pathway is purine metabolism; IMP biosynthesis via de novo pathway; 5-amino-1-(5-phospho-D-ribosyl)imidazole from N(2)-formyl-N(1)-(5-phospho-D-ribosyl)glycinamide: step 1/2. Its function is as follows. Part of the phosphoribosylformylglycinamidine synthase complex involved in the purines biosynthetic pathway. Catalyzes the ATP-dependent conversion of formylglycinamide ribonucleotide (FGAR) and glutamine to yield formylglycinamidine ribonucleotide (FGAM) and glutamate. The FGAM synthase complex is composed of three subunits. PurQ produces an ammonia molecule by converting glutamine to glutamate. PurL transfers the ammonia molecule to FGAR to form FGAM in an ATP-dependent manner. PurS interacts with PurQ and PurL and is thought to assist in the transfer of the ammonia molecule from PurQ to PurL. In Lacticaseibacillus paracasei (strain ATCC 334 / BCRC 17002 / CCUG 31169 / CIP 107868 / KCTC 3260 / NRRL B-441) (Lactobacillus paracasei), this protein is Phosphoribosylformylglycinamidine synthase subunit PurL.